Here is a 302-residue protein sequence, read N- to C-terminus: Acetylesterase (302 aa).

The N-terminal stretch at 1-21 is a signal peptide; sequence MGRFLTTTALALLATGGAATA. N-linked (GlcNAc...) asparagine glycosylation is found at Asn84 and Asn101.

The protein belongs to the carbohydrate esterase CE16 family.

Its subcellular location is the secreted. It carries out the reaction an acetyl ester + H2O = an aliphatic alcohol + acetate + H(+). Acetyl esterase that acts as an exo-deacetylase. Liberates acetic acid from xylo-oligomers. The sequence is that of Acetylesterase from Thermothelomyces thermophilus (Myceliophthora thermophila).